Reading from the N-terminus, the 143-residue chain is Large ribosomal subunit protein uL15 (143 aa).

The protein belongs to the universal ribosomal protein uL15 family. Part of the 50S ribosomal subunit.

Binds to the 23S rRNA. This is Large ribosomal subunit protein uL15 from Methanococcus aeolicus (strain ATCC BAA-1280 / DSM 17508 / OCM 812 / Nankai-3).